The sequence spans 409 residues: LL-diaminopimelate aminotransferase (409 aa).

Substrate is bound by residues Y15 and G42. Pyridoxal 5'-phosphate is bound by residues Y72, 108–109, Y132, N186, Y217, and 245–247; these read AK and SFS. The substrate site is built by K109, Y132, and N186. K248 bears the N6-(pyridoxal phosphate)lysine mark. Positions 256 and 291 each coordinate pyridoxal 5'-phosphate. 2 residues coordinate substrate: N291 and R387.

Belongs to the class-I pyridoxal-phosphate-dependent aminotransferase family. LL-diaminopimelate aminotransferase subfamily. Homodimer. It depends on pyridoxal 5'-phosphate as a cofactor.

The catalysed reaction is (2S,6S)-2,6-diaminopimelate + 2-oxoglutarate = (S)-2,3,4,5-tetrahydrodipicolinate + L-glutamate + H2O + H(+). It participates in amino-acid biosynthesis; L-lysine biosynthesis via DAP pathway; LL-2,6-diaminopimelate from (S)-tetrahydrodipicolinate (aminotransferase route): step 1/1. In terms of biological role, involved in the synthesis of meso-diaminopimelate (m-DAP or DL-DAP), required for both lysine and peptidoglycan biosynthesis. Catalyzes the direct conversion of tetrahydrodipicolinate to LL-diaminopimelate. The sequence is that of LL-diaminopimelate aminotransferase from Phocaeicola vulgatus (strain ATCC 8482 / DSM 1447 / JCM 5826 / CCUG 4940 / NBRC 14291 / NCTC 11154) (Bacteroides vulgatus).